We begin with the raw amino-acid sequence, 328 residues long: Urokinase plasminogen activator surface receptor (328 aa).

The signal sequence occupies residues 1–24 (MGLLRRRLLLLVVVVTTCVPASQG). 3 UPAR/Ly6 domains span residues 25 to 118 (LRCI…GRYL), 118 to 213 (LECA…PPNG), and 214 to 299 (FQCY…RPTG). 3 disulfides stabilise this stretch: Cys-27-Cys-48, Cys-30-Cys-36, and Cys-41-Cys-69. A glycan (N-linked (GlcNAc...) asparagine) is linked at Asn-76. Cystine bridges form between Cys-95–Cys-100, Cys-120–Cys-147, Cys-123–Cys-130, Cys-140–Cys-169, Cys-175–Cys-192, Cys-193–Cys-198, Cys-216–Cys-244, Cys-219–Cys-227, Cys-237–Cys-263, Cys-269–Cys-288, and Cys-289–Cys-294. N-linked (GlcNAc...) asparagine glycans are attached at residues Asn-184, Asn-194, Asn-222, Asn-255, Asn-283, and Asn-290. Residue Gly-299 is the site of GPI-anchor amidated glycine attachment. A propeptide spans 300–328 (GAPGPGPAHLILIASLLLTLRLWGIPLWT) (removed in mature form).

Monomer. Interacts (via the UPAR/Ly6 domains) with SRPX2. Interacts with MRC2. Interacts with SORL1 (via N-terminal ectodomain); this interaction decreases PLAUR internalization. The ternary complex composed of PLAUR-PLAU-SERPINE1 also interacts with SORL1. Interacts with CD82; this interaction prevents PLAUR from binding to its high affinity ligand PLAU.

The protein localises to the cell membrane. Its subcellular location is the secreted. Functionally, acts as a receptor for urokinase plasminogen activator. Plays a role in localizing and promoting plasmin formation. Mediates the proteolysis-independent signal transduction activation effects of U-PA. The protein is Urokinase plasminogen activator surface receptor (Plaur) of Rattus norvegicus (Rat).